Here is a 181-residue protein sequence, read N- to C-terminus: Adenylyl-sulfate kinase (181 aa).

An ATP-binding site is contributed by 20–27 (GLSGAGKS). Residue S94 is the Phosphoserine intermediate of the active site.

This sequence belongs to the APS kinase family.

The catalysed reaction is adenosine 5'-phosphosulfate + ATP = 3'-phosphoadenylyl sulfate + ADP + H(+). The protein operates within sulfur metabolism; hydrogen sulfide biosynthesis; sulfite from sulfate: step 2/3. Catalyzes the synthesis of activated sulfate. This is Adenylyl-sulfate kinase from Deinococcus geothermalis (strain DSM 11300 / CIP 105573 / AG-3a).